Here is a 591-residue protein sequence, read N- to C-terminus: Paxillin (591 aa).

Position 1 is an N-acetylmethionine (Met-1). The short motif at 3–15 (DLDALLADLESTT) is the LD motif 1 element. Residues 17–139 (HISKRPVFLS…SPTVMSSSLG (123 aa)) form a disordered region. Tyr-31 bears the Phosphotyrosine; by PTK6 mark. The span at 45–54 (VPPPVPPPPS) shows a compositional bias: pro residues. Phosphoserine is present on Ser-83. Position 88 is a phosphotyrosine (Tyr-88). Residues 89–99 (SSSAKNSSASN) are compositionally biased toward low complexity. At Ser-106 the chain carries Phosphoserine. At Tyr-118 the chain carries Phosphotyrosine; by PTK6. Residues Ser-119, Ser-126, and Ser-130 each carry the phosphoserine modification. Residues 121-137 (PNKQKSAEPSPTVMSSS) show a composition bias toward polar residues. Residue Thr-132 is modified to Phosphothreonine. Residues Ser-137, Ser-140, and Ser-143 each carry the phosphoserine modification. Residues 144–156 (ELDRLLLELNAVQ) carry the LD motif 2 motif. The disordered stretch occupies residues 156–261 (QHSPPGFPAD…QQQTRISASS (106 aa)). Phosphotyrosine is present on Tyr-181. Residues 216-228 (SVESLLDELESSV) carry the LD motif 3 motif. Position 230 is a phosphoserine (Ser-230). Residues 236–261 (TVNQGEMSSPQRVTSSQQQTRISASS) are compositionally biased toward polar residues. Ser-244 is modified (phosphoserine; by CDK5). Residues Ser-250, Ser-258, Ser-261, Ser-272, Ser-303, Ser-322, Ser-332, and Ser-340 each carry the phosphoserine modification. The segment at 262–315 (ATRELDELMASLSDFKMQGLEQRVDGERPWAAGWPPSSRQSSPEGQDEGGFMAQ) is required for binding to PARVA and ILK. An LD motif 4 motif is present at residues 265-276 (ELDELMASLSDF). The disordered stretch occupies residues 289–338 (RPWAAGWPPSSRQSSPEGQDEGGFMAQGKTGSSSPPGGLSKPGSQLDSML). A compositionally biased stretch (low complexity) spans 315–334 (QGKTGSSSPPGGLSKPGSQL). The LD motif 5 signature appears at 333–345 (QLDSMLGSLQSDL). 4 consecutive LIM zinc-binding domains span residues 356-415 (GVCG…LFSP), 416-473 (RCYY…DMFA), 474-533 (PKCG…RRGS), and 534-591 (LCSG…KLFC). Phosphoserine is present on Ser-533.

It belongs to the paxillin family. Interacts in vitro with VCL/vinculin as well as to the SH3 domain of SRC and, when tyrosine phosphorylated, to the SH2 domain of CRK. Interacts with GIT1. Interacts with NUDT16L1/SDOS. Interacts with PTK2/FAK1. Interacts with PTK2B/PYK2. Interacts with ASAP2. Interacts with unphosphorylated ITGA4. Interacts with RNF5. Interacts with PDCD10. Interacts with NEK3, the interaction is prolactin-dependent. Interacts with PTK6. Interacts with TGFB1I1. Interacts with SORBS1. Interacts with PARVB. Interacts (via LD motif 4) with PARVA/PARVIN. Interacts (via LD motif 4) with ILK. Interacts (via cytoplasmic domain) with CEACAM1; the interaction is phosphotyrosyl-dependent. Interacts with LIMA1; this complex stabilizes actin dynamics. Interacts with CD36 (via C-terminus). Interacts with TRIM15. Interacts with PAK4; PAK4 acts as a scaffold to suppport PAXI phosphorylation at Ser-272. Post-translationally, phosphorylated by MAPK1/ERK2. Phosphorylated on tyrosine residues during integrin-mediated cell adhesion, embryonic development, fibroblast transformation and following stimulation of cells by mitogens. Phosphorylation at Ser-244 by CDK5 reduces its interaction with PTK2/FAK1 in matrix-cell focal adhesions (MCFA) during oligodendrocytes (OLs) differentiation. Phosphorylation at Tyr-31 and Tyr-118 by PTK6 promote the activation of RAC1 via CRK/CrKII, thereby promoting migration and invasion. Phosphorylation at Ser-250 by SLK is required for PXN redistribution and cell motility. Phosphorylation at Ser-272 promotes focal adhesion disassembly during cell migration.

It localises to the cytoplasm. The protein resides in the cytoskeleton. It is found in the cell junction. Its subcellular location is the focal adhesion. The protein localises to the cell cortex. Its function is as follows. Cytoskeletal protein involved in actin-membrane attachment at sites of cell adhesion to the extracellular matrix (focal adhesion). Recruits other proteins such as TRIM15 to focal adhesion. The protein is Paxillin of Mus musculus (Mouse).